A 221-amino-acid chain; its full sequence is MANSGEEKLKLYSYWRSSCAHRVRIALALKGLDYEYIPVNLLKGDQFDSDFKKINPMGTVPALVDGDVVINDSFAIIMYLDEKYPEPPLLPRDLHKRAVNYQAMSIVLSGIQPHQNLAVIRYIEEKINVEEKTAWVNNAITKGFTALEKLLVNCAGKHATGDEIYLADLFLAPQIHGAINRFQINMEPYPTLAKCYESYNELPAFQNALPEKQPDAPSSTI.

The GST N-terminal domain occupies 7–88 (EKLKLYSYWR…YLDEKYPEPP (82 aa)). Residues 17–18 (SS), 17–22 (SSCAHR), Gln46, 46–47 (QF), 59–60 (TV), Val60, 72–73 (DS), Gln112, and 116–118 (NLA) contribute to the glutathione site. The region spanning 93-218 (DLHKRAVNYQ…LPEKQPDAPS (126 aa)) is the GST C-terminal domain.

This sequence belongs to the GST superfamily. Zeta family. As to quaternary structure, homodimer.

Its subcellular location is the cytoplasm. The protein localises to the cytosol. The enzyme catalyses RX + glutathione = an S-substituted glutathione + a halide anion + H(+). Acts a maleylacetone isomerase. Also catalyzes the glutathione-dependent dehalogenation of dichloroacetic acid to glyoxylic acid. In vitro, possesses glutathione peroxidase activity toward cumene hydroperoxide and linoleic acid-13-hydroperoxide. The sequence is that of Glutathione S-transferase Z1 (GSTZ1) from Arabidopsis thaliana (Mouse-ear cress).